A 246-amino-acid chain; its full sequence is Putative protein phosphatase 2C-type (246 aa).

In terms of domain architecture, PPM-type phosphatase spans 2-240 (KISLKTDIGQ…DNITIALVHN (239 aa)). The Mn(2+) site is built by Asp36, Gly37, Asp192, and Asp231.

Requires Mg(2+) as cofactor. Mn(2+) is required as a cofactor.

It catalyses the reaction O-phospho-L-seryl-[protein] + H2O = L-seryl-[protein] + phosphate. The enzyme catalyses O-phospho-L-threonyl-[protein] + H2O = L-threonyl-[protein] + phosphate. This chain is Putative protein phosphatase 2C-type, found in Streptococcus pyogenes serotype M6 (strain ATCC BAA-946 / MGAS10394).